Reading from the N-terminus, the 349-residue chain is Hyaluronidase Tab y 2.0101 (349 aa).

The N-terminal stretch at 1-25 (MKLHQGLVCLSVLILLPTCILGDRK) is a signal peptide. Intrachain disulfides connect cysteine 37-cysteine 328 and cysteine 205-cysteine 216. 4 N-linked (GlcNAc...) asparagine glycosylation sites follow: asparagine 41, asparagine 81, asparagine 99, and asparagine 119. Glutamate 129 serves as the catalytic Proton donor. Residue asparagine 147 is glycosylated (N-linked (GlcNAc...) asparagine). Residues asparagine 251 and asparagine 297 are each glycosylated (N-linked (GlcNAc...) asparagine).

The protein belongs to the glycosyl hydrolase 56 family. In terms of tissue distribution, expressed in salivary glands.

It is found in the secreted. It catalyses the reaction Random hydrolysis of (1-&gt;4)-linkages between N-acetyl-beta-D-glucosamine and D-glucuronate residues in hyaluronate.. Its function is as follows. Hydrolyzes high molecular weight hyaluronic acid to produce small oligosaccharides. The sequence is that of Hyaluronidase Tab y 2.0101 from Tabanus yao (Horsefly).